Here is a 469-residue protein sequence, read N- to C-terminus: 3-isopropylmalate dehydratase large subunit (469 aa).

Residues Cys-347, Cys-408, and Cys-411 each contribute to the [4Fe-4S] cluster site.

Belongs to the aconitase/IPM isomerase family. LeuC type 1 subfamily. Heterodimer of LeuC and LeuD. The cofactor is [4Fe-4S] cluster.

The enzyme catalyses (2R,3S)-3-isopropylmalate = (2S)-2-isopropylmalate. The protein operates within amino-acid biosynthesis; L-leucine biosynthesis; L-leucine from 3-methyl-2-oxobutanoate: step 2/4. Catalyzes the isomerization between 2-isopropylmalate and 3-isopropylmalate, via the formation of 2-isopropylmaleate. This is 3-isopropylmalate dehydratase large subunit from Haemophilus influenzae (strain 86-028NP).